The primary structure comprises 244 residues: Claudin-12 (244 aa).

Residues 1-10 are Cytoplasmic-facing; the sequence is MGCRDVHAAT. A helical membrane pass occupies residues 11–31; the sequence is VLSFLCGIASVAGLFAGTLLP. Residues 32 to 87 lie on the Extracellular side of the membrane; sequence NWRKLRLITFNRNEKNLTIYTGLWVKCARYDGSSDCLMYDRTWYLSVDQLDLRVLQ. The helical transmembrane segment at 88 to 108 threads the bilayer; that stretch reads FALPLSIVIAMGALLLCLIGM. Residues 109-135 lie on the Cytoplasmic side of the membrane; that stretch reads CNTAFNSSVPNIKLAKCLVNSAGCHLV. Residues 136 to 156 form a helical membrane-spanning segment; sequence AGLLFFLAGTVSLSPSIWAIF. Topologically, residues 157–174 are extracellular; it reads YNSHLNRKFEPVFTFDYA. Residues 175–195 form a helical membrane-spanning segment; sequence VFVTIASSGGLFMTALLLFVW. Over 196 to 244 the chain is Cytoplasmic; sequence YCACKSLSSPFWQPLYSHAPGMHTYSQPYSSRSRLSAIEIDIPVVSHST. Phosphoserine is present on residues S228 and S231.

It belongs to the claudin family. In terms of assembly, interacts with OCLN.

It localises to the cell junction. Its subcellular location is the tight junction. The protein localises to the cell membrane. Plays a major role in tight junction-specific obliteration of the intercellular space, through calcium-independent cell-adhesion activity. This is Claudin-12 (Cldn12) from Mus musculus (Mouse).